The sequence spans 70 residues: Large ribosomal subunit protein bL31c (70 aa).

The protein belongs to the bacterial ribosomal protein bL31 family. Type A subfamily. In terms of assembly, part of the 50S ribosomal subunit.

The protein resides in the plastid. It localises to the chloroplast. Binds the 23S rRNA. This is Large ribosomal subunit protein bL31c from Porphyra purpurea (Red seaweed).